The sequence spans 62 residues: Potassium channel toxin alpha-KTx 10.1 (62 aa).

The N-terminal stretch at 1 to 22 (MEGIAKITLILLFLFVTMHTFA) is a signal peptide. A propeptide spanning residues 23–28 (NWNTEA) is cleaved from the precursor. Intrachain disulfides connect C31–C50, C36–C55, and C40–C57. At Y60 the chain carries Tyrosine amide.

The protein belongs to the short scorpion toxin superfamily. Potassium channel inhibitor family. Alpha-KTx 10 subfamily. In terms of tissue distribution, expressed by the venom gland.

The protein localises to the secreted. Functionally, blocks Shaker B (Sh) and voltage-gated potassium-channels Kv1.1/KCNA1, Kv1.2/KCNA2, Kv1.3/KCNA3. Also inhibits small conductance calcium-activated potassium channels (KCNN) and intermediate conductance calcium-activated potassium channel (KCa3.1/KCNN4). This is Potassium channel toxin alpha-KTx 10.1 from Centruroides noxius (Mexican scorpion).